The sequence spans 545 residues: Chaperonin GroEL (545 aa).

Residues 30-33, lysine 51, 87-91, glycine 415, and aspartate 496 contribute to the ATP site; these read TLGP and DGTTT.

This sequence belongs to the chaperonin (HSP60) family. Forms a cylinder of 14 subunits composed of two heptameric rings stacked back-to-back. Interacts with the co-chaperonin GroES.

The protein localises to the cytoplasm. The enzyme catalyses ATP + H2O + a folded polypeptide = ADP + phosphate + an unfolded polypeptide.. Together with its co-chaperonin GroES, plays an essential role in assisting protein folding. The GroEL-GroES system forms a nano-cage that allows encapsulation of the non-native substrate proteins and provides a physical environment optimized to promote and accelerate protein folding. This chain is Chaperonin GroEL, found in Rhodobacter capsulatus (Rhodopseudomonas capsulata).